The following is a 121-amino-acid chain: UPF0091 protein PH1428 (121 aa).

It belongs to the UPF0091 family.

In Pyrococcus horikoshii (strain ATCC 700860 / DSM 12428 / JCM 9974 / NBRC 100139 / OT-3), this protein is UPF0091 protein PH1428.